The chain runs to 274 residues: Diaminopimelate epimerase (274 aa).

3 residues coordinate substrate: Asn-11, Gln-44, and Asn-64. The Proton donor role is filled by Cys-73. Substrate-binding positions include 74–75 (GN), Asn-157, Asn-190, and 208–209 (ER). The active-site Proton acceptor is Cys-217. Substrate is bound at residue 218-219 (GS).

Belongs to the diaminopimelate epimerase family. Homodimer.

It localises to the cytoplasm. The enzyme catalyses (2S,6S)-2,6-diaminopimelate = meso-2,6-diaminopimelate. The protein operates within amino-acid biosynthesis; L-lysine biosynthesis via DAP pathway; DL-2,6-diaminopimelate from LL-2,6-diaminopimelate: step 1/1. Catalyzes the stereoinversion of LL-2,6-diaminopimelate (L,L-DAP) to meso-diaminopimelate (meso-DAP), a precursor of L-lysine and an essential component of the bacterial peptidoglycan. In Photorhabdus laumondii subsp. laumondii (strain DSM 15139 / CIP 105565 / TT01) (Photorhabdus luminescens subsp. laumondii), this protein is Diaminopimelate epimerase.